A 604-amino-acid polypeptide reads, in one-letter code: NADH-ubiquinone oxidoreductase chain 5 (604 aa).

16 helical membrane-spanning segments follow: residues 2–22, 41–61, 85–105, 115–135, 138–158, 169–189, 209–231, 239–259, 271–291, 299–318, 323–345, 364–384, 411–431, 455–475, 486–506, and 582–602; these read FSSL…LSIF, AFIT…ETII, MIFV…SLWY, FFKY…ANNL, LFIG…WWYG, AILY…WFLF, LPLL…HPWL, TPVS…FLLI, IQSL…ICAL, IIAF…IGIN, AFLH…GSII, MPFT…IPFL, LIAT…ALLG, LLIG…PTTV, LTAL…SLMT, and IKLY…LFNL.

It belongs to the complex I subunit 5 family. Core subunit of respiratory chain NADH dehydrogenase (Complex I) which is composed of 45 different subunits.

It localises to the mitochondrion inner membrane. It catalyses the reaction a ubiquinone + NADH + 5 H(+)(in) = a ubiquinol + NAD(+) + 4 H(+)(out). Its function is as follows. Core subunit of the mitochondrial membrane respiratory chain NADH dehydrogenase (Complex I) which catalyzes electron transfer from NADH through the respiratory chain, using ubiquinone as an electron acceptor. Essential for the catalytic activity and assembly of complex I. In Equus caballus (Horse), this protein is NADH-ubiquinone oxidoreductase chain 5 (MT-ND5).